Reading from the N-terminus, the 374-residue chain is uncharacterized protein (374 aa).

Residues 197 to 223 (GTTTTTNNNNNNNNNNNNNNNNGTNIT) form a disordered region. Positions 198–223 (TTTTTNNNNNNNNNNNNNNNNGTNIT) are enriched in low complexity. Positions 302-342 (DEVSDCNDINTNLKKKRKQQEQLQIEKEKKLLTIQQEQTKI) form a coiled coil.

This is an uncharacterized protein from Dictyostelium discoideum (Social amoeba).